The primary structure comprises 362 residues: Phosphoserine aminotransferase (362 aa).

L-glutamate is bound by residues Ser9 and Arg42. Residues 76 to 77 (GR), Trp102, Thr153, Asp174, and Gln197 contribute to the pyridoxal 5'-phosphate site. N6-(pyridoxal phosphate)lysine is present on Lys198. 239–240 (NT) lines the pyridoxal 5'-phosphate pocket.

Belongs to the class-V pyridoxal-phosphate-dependent aminotransferase family. SerC subfamily. As to quaternary structure, homodimer. It depends on pyridoxal 5'-phosphate as a cofactor.

It is found in the cytoplasm. The enzyme catalyses O-phospho-L-serine + 2-oxoglutarate = 3-phosphooxypyruvate + L-glutamate. The catalysed reaction is 4-(phosphooxy)-L-threonine + 2-oxoglutarate = (R)-3-hydroxy-2-oxo-4-phosphooxybutanoate + L-glutamate. It participates in amino-acid biosynthesis; L-serine biosynthesis; L-serine from 3-phospho-D-glycerate: step 2/3. The protein operates within cofactor biosynthesis; pyridoxine 5'-phosphate biosynthesis; pyridoxine 5'-phosphate from D-erythrose 4-phosphate: step 3/5. Catalyzes the reversible conversion of 3-phosphohydroxypyruvate to phosphoserine and of 3-hydroxy-2-oxo-4-phosphonooxybutanoate to phosphohydroxythreonine. This chain is Phosphoserine aminotransferase, found in Shigella dysenteriae serotype 1 (strain Sd197).